The sequence spans 102 residues: Large ribosomal subunit protein bL21 (102 aa).

Belongs to the bacterial ribosomal protein bL21 family. As to quaternary structure, part of the 50S ribosomal subunit. Contacts protein L20.

In terms of biological role, this protein binds to 23S rRNA in the presence of protein L20. The chain is Large ribosomal subunit protein bL21 from Zymomonas mobilis subsp. mobilis (strain ATCC 31821 / ZM4 / CP4).